Reading from the N-terminus, the 744-residue chain is Dual specificity protein kinase shkD (744 aa).

The disordered stretch occupies residues Met-1 to Glu-276. Low complexity-rich tracts occupy residues Pro-25–Gln-70, Ser-79–Pro-107, and Thr-127–Ser-200. Residues Val-201 to Leu-210 show a composition bias toward polar residues. Over residues Asn-211 to Asn-236 the composition is skewed to low complexity. A Protein kinase domain is found at Ile-277–Leu-534. ATP contacts are provided by residues Leu-283 to Val-291 and Lys-304. The active-site Proton acceptor is Asp-400. In terms of domain architecture, SH2 spans Trp-641–Glu-734.

It belongs to the protein kinase superfamily. Ser/Thr protein kinase family. SH2 domain-containing protein kinase subfamily.

It is found in the membrane. The catalysed reaction is L-seryl-[protein] + ATP = O-phospho-L-seryl-[protein] + ADP + H(+). The enzyme catalyses L-threonyl-[protein] + ATP = O-phospho-L-threonyl-[protein] + ADP + H(+). Functionally, required for proper chemotaxis and phagocytosis; proper spatiotemporal control of F-actin levels in chemotaxing cells. Negative regulator of the PI3K (phosphatidylinositol 3 kinase) pathway. Predominantly phosphorylates serines and threonines and tyrosines at a lower level. This Dictyostelium discoideum (Social amoeba) protein is Dual specificity protein kinase shkD (shkD).